A 747-amino-acid polypeptide reads, in one-letter code: Ferrichrome outer membrane transporter/phage receptor (747 aa).

Residues 1–33 (MARSKTAQPKHSLRKIAVVVATAVSGMSVYAQA) form the signal peptide. Residues 34–192 (AVEPKEDTIT…NMVSKRPTTE (159 aa)) lie on the Periplasmic side of the membrane. The short motif at 40-47 (DTITVTAA) is the TonB box element. A TBDR plug domain is found at 75 to 187 (PIQKVPQSIS…PGGLLNMVSK (113 aa)). Residues arginine 114, glutamine 133, and 148 to 149 (FY) contribute to the ferrichrome site. A TBDR beta-barrel domain is found at 192–747 (EPLKEVQFKA…QVVATATFRF (556 aa)). Residues 193-201 (PLKEVQFKA) traverse the membrane as a beta stranded segment. Over 202-206 (GTDSL) the chain is Extracellular. The chain crosses the membrane as a beta stranded span at residues 207 to 215 (FQTGFDFSD). Residues 216–222 (SLDDDGV) are Periplasmic-facing. The beta stranded transmembrane segment at 223-231 (YSYRLTGLA) threads the bilayer. At 232–245 (RSANAQQKGSEEQR) the chain is on the extracellular side. Residues 246 to 255 (YAIAPAFTWR) form a beta stranded membrane-spanning segment. The Periplasmic segment spans residues 256–259 (PDDK). Residues 260–268 (TNFTFLSYF) form a beta stranded membrane-spanning segment. The Extracellular segment spans residues 269–312 (QNEPETGYYGWLPKEGTVEPLPNGKRLPTDFNEGAKNNTYSRNE). 277–279 (YGW) contributes to the ferrichrome binding site. The beta stranded transmembrane segment at 313–321 (KMVGYSFDH) threads the bilayer. The Periplasmic segment spans residues 322 to 326 (EFNDT). Residues 327-335 (FTVRQNLRF) form a beta stranded membrane-spanning segment. Residues 336-387 (AENKTSQNSVYGYGVCSDPANAYSKQCAALAPADKGHYLARKYVVDDEKLQN) lie on the Extracellular side of the membrane. Residue 346-348 (YGY) participates in ferrichrome binding. A disulfide bridge connects residues cysteine 351 and cysteine 362. Residues 388–396 (FSVDTQLQS) form a beta stranded membrane-spanning segment. Over 397 to 404 (KFATGDID) the chain is Periplasmic. A beta stranded membrane pass occupies residues 405 to 413 (HTLLTGVDF). Residues 414 to 464 (MRMRNDINAWFGYDDSVPLLNLYNPVNTDFDFNAKDPANSGPYRILNKQKQ) are Extracellular-facing. Phenylalanine 424 contacts ferrichrome. Residues 465–473 (TGVYVQDQA) traverse the membrane as a beta stranded segment. At 474-477 (QWDK) the chain is on the periplasmic side. The chain crosses the membrane as a beta stranded span at residues 478–486 (VLVTLGGRY). Residues 487–508 (DWADQESLNRVAGTTDKRDDKQ) lie on the Extracellular side of the membrane. The chain crosses the membrane as a beta stranded span at residues 509–517 (FTWRGGVNY). The Periplasmic portion of the chain corresponds to 518–522 (LFDNG). A beta stranded transmembrane segment spans residues 523-531 (VTPYFSYSE). Topologically, residues 532-551 (SFEPSSQVGKDGNIFAPSKG) are extracellular. A beta stranded membrane pass occupies residues 552-560 (KQYEVGVKY). The Periplasmic portion of the chain corresponds to 561–565 (VPEDR). A beta stranded transmembrane segment spans residues 566–574 (PIVVTGAVY). Over 575-601 (NLTKTNNLMADPEGSFFSVEGGEIRAR) the chain is Extracellular. Residues 602–610 (GVEIEAKAA) form a beta stranded membrane-spanning segment. Residues 611-613 (LSA) lie on the Periplasmic side of the membrane. A beta stranded transmembrane segment spans residues 614–622 (SVNVVGSYT). Topologically, residues 623–645 (YTDAEYTTDTTYKGNTPAQVPKH) are extracellular. The beta stranded transmembrane segment at 646–654 (MASLWADYT) threads the bilayer. The Periplasmic segment spans residues 655–661 (FFDGPLS). Residues 662-670 (GLTLGTGGR) traverse the membrane as a beta stranded segment. Over 671 to 689 (YTGSSYGDPANSFKVGSYT) the chain is Extracellular. Residues 690 to 698 (VVDALVRYD) traverse the membrane as a beta stranded segment. Topologically, residues 699-705 (LARVGMA) are periplasmic. The beta stranded transmembrane segment at 706–714 (GSNVALHVN) threads the bilayer. Over 715-737 (NLFDREYVASCFNTYGCFWGAER) the chain is Extracellular. Cysteine 725 and cysteine 731 form a disulfide bridge. The TonB C-terminal box signature appears at 730–747 (GCFWGAERQVVATATFRF). Residue alanine 735 participates in ferrichrome binding. Residues 738–746 (QVVATATFR) traverse the membrane as a beta stranded segment. A topological domain (periplasmic) is located at residue phenylalanine 747.

It belongs to the TonB-dependent receptor family. Monomer. Interacts with TonB. Interacts with Escherichia phage T5 receptor-binding protein pb5 (RBP-pb5); this interaction is necessary for the entry of the viral genome into the host cell.

It is found in the cell outer membrane. With respect to regulation, binding of ferrichrome or colicin M enhances the interaction between FhuA and TonB. TonB activates FhuA through interaction with the beta-barrel. Its function is as follows. Involved in the uptake of iron in complex with ferrichrome, a hydroxamate-type siderophore. Binds and transports ferrichrome-iron across the outer membrane. In addition to its role in ferrichrome-iron transport, transports the antibiotic albomycin, which is a structural analog of ferrichrome, and acts as a receptor for colicin M, microcin J25 and bacteriophages T1, T5, phi80 and UC-1. The energy source, which is required for all FhuA functions except infection by phage T5, is provided by the inner membrane TonB system. The polypeptide is Ferrichrome outer membrane transporter/phage receptor (Escherichia coli (strain K12)).